A 503-amino-acid chain; its full sequence is Maturase K (503 aa).

Belongs to the intron maturase 2 family. MatK subfamily.

Its subcellular location is the plastid. It is found in the chloroplast. Usually encoded in the trnK tRNA gene intron. Probably assists in splicing its own and other chloroplast group II introns. The sequence is that of Maturase K from Rosa gigantea (Giant tea rose).